The sequence spans 1728 residues: Protein NETWORKED 1A (1728 aa).

An NAB domain is found at 13 to 92 (YSWWWDSHIP…ERYDHATVEL (80 aa)). Coiled coils occupy residues 155 to 446 (LGNS…LEIE), 476 to 827 (MLRD…QVEI), 857 to 885 (FSEKLIAELESENLEQQMEAEFLVHEIDN), 954 to 1016 (QFQS…AELQ), 1090 to 1323 (EQAE…KETV), 1403 to 1431 (LLQDMKTRIKTIKQAVAEEKKRRGKLRRR), and 1576 to 1684 (RRLA…TKSK). The tract at residues 1419-1441 (AEEKKRRGKLRRRSSSHRSKDRK) is disordered. The segment covering 1424–1439 (RRGKLRRRSSSHRSKD) has biased composition (basic residues).

It belongs to the NET family. As to quaternary structure, interacts with F-actin. As to expression, expressed in root meristems and at very low levels throughout mature vasculature.

The protein resides in the cytoplasm. Its subcellular location is the cytoskeleton. The protein localises to the cell membrane. It is found in the cell junction. It localises to the plasmodesma. In terms of biological role, plant-specific actin binding protein. Associates with F-actin at the plasma membrane and plasmodesmata. May be part of a membrane-cytoskeletal adapter complex. The polypeptide is Protein NETWORKED 1A (Arabidopsis thaliana (Mouse-ear cress)).